We begin with the raw amino-acid sequence, 215 residues long: MSSTEEKFSLKEVLVSFKACLIDDDKDVILEHYVNGWKGLVRFMSSLGTIFSFVSKDAVSKIQIMESYLAGPNGERYRTLQSMVEYELSSDLVDLTKRSDHTDSGCRTLLRLHRALRWLQLFLEKLRVSNEDSKTSTLCTEAYNDSLANFHPWIVRKAATVSFIALPYRNTFFEIMNVGTTEEVVAMLGESMPYVTKVYDFTQEVYSQHNLLELP.

Residues Asp57, Lys61, Arg107, Arg111, and His151 each contribute to the an N-acylsphingoid base 1-phosphate site.

Belongs to the GLTP family.

The protein localises to the cytoplasm. Its subcellular location is the cytosol. It localises to the golgi apparatus. The protein resides in the trans-Golgi network membrane. It is found in the cell membrane. The protein localises to the endosome membrane. Its subcellular location is the nucleus outer membrane. The catalysed reaction is N-(hexadecanoyl)-sphing-4-enine-1-phosphate(in) = N-(hexadecanoyl)-sphing-4-enine-1-phosphate(out). It carries out the reaction N-(9Z-octadecenoyl)-sphing-4-enine-1-phosphate(in) = N-(9Z-octadecenoyl)-sphing-4-enine-1-phosphate(out). In terms of biological role, mediates the intracellular transfer of ceramide-1-phosphate (C1P) between organelle membranes and the cell membrane. Required for normal structure of the Golgi stacks. Can bind phosphoceramides with a variety of aliphatic chains, but has a preference for lipids with saturated C16:0 or monounsaturated C18:1 aliphatic chains, and is inefficient with phosphoceramides containing lignoceryl (C24:0). Plays a role in the regulation of the cellular levels of ceramide-1-phosphate, and thereby contributes to the regulation of phospholipase PLA2G4A activity and the release of arachidonic acid. Has no activity with galactosylceramide, lactosylceramide, sphingomyelin, phosphatidylcholine, phosphatidic acid and ceramide. C1P transfer is stimulated by phosphatidylserine in C1P source vesicles. Regulates autophagy and pyroptosis, but not apoptosis. This is Ceramide-1-phosphate transfer protein (cptp) from Xenopus laevis (African clawed frog).